A 450-amino-acid polypeptide reads, in one-letter code: Probable galactarate/D-glucarate transporter GudP (450 aa).

Residues 1–20 lie on the Cytoplasmic side of the membrane; the sequence is MSSLSQAASSVEKRTNARYW. The helical transmembrane segment at 21–41 threads the bilayer; sequence IVVMLFIVTSFNYGDRATLSI. At 42-58 the chain is on the periplasmic side; it reads AGSEMAKDIGLDPVGMG. Residues 59 to 79 form a helical membrane-spanning segment; sequence YVFSAFSWAYVIGQIPGGWLL. Residues 80-85 are Cytoplasmic-facing; the sequence is DRFGSK. Residues 86-105 traverse the membrane as a helical segment; that stretch reads RVYFWSIFIWSMFTLLQGFV. Over 106-109 the chain is Periplasmic; that stretch reads DIFS. Residues 110-132 traverse the membrane as a helical segment; the sequence is GFGIIVALFTLRFLVGLAEAPSF. The Cytoplasmic segment spans residues 133–153; it reads PGNSRIVAAWFPAQERGTAVS. Residues 154 to 174 form a helical membrane-spanning segment; sequence IFNSAQYFATVIFAPIMGWLT. Residues 175–176 are Periplasmic-facing; that stretch reads HE. Residues 177–197 form a helical membrane-spanning segment; it reads VGWSHVFFFMGGLGIVISFIW. Residues 198-254 are Cytoplasmic-facing; sequence LKVIHEPNQHPGVNKKELEYIAAGGALINMDQQNTKVKVPFSVKWGQIKQLLGSRMM. Residues 255–275 form a helical membrane-spanning segment; it reads IGVYIGQYCINALTYFFITWF. The Periplasmic segment spans residues 276–290; sequence PVYLVQARGMSILKA. A helical transmembrane segment spans residues 291–311; the sequence is GFVASVPAVCGFIGGVLGGII. Over 312–329 the chain is Cytoplasmic; sequence SDWLMRRTGSLNIARKTP. Residues 330-350 traverse the membrane as a helical segment; the sequence is IVMGMLLSMVMVFCNYVNVEW. Methionine 351 is a topological domain (periplasmic). The helical transmembrane segment at 352–372 threads the bilayer; sequence IIGFMALAFFGKGIGALGWAV. The Cytoplasmic portion of the chain corresponds to 373 to 387; it reads MADTAPKEISGLSGG. Residues 388 to 408 traverse the membrane as a helical segment; it reads LFNMFGNISGIVTPIAIGYIV. The Periplasmic portion of the chain corresponds to 409 to 415; that stretch reads GTTGSFN. A helical transmembrane segment spans residues 416–436; that stretch reads GALIYVGVHALIAVLSYLVLV. Residues 437 to 450 are Cytoplasmic-facing; it reads GDIKRIELKPVAGQ.

This sequence belongs to the major facilitator superfamily. Phthalate permease family.

The protein resides in the cell inner membrane. It carries out the reaction galactarate(in) + H(+)(in) = galactarate(out) + H(+)(out). The enzyme catalyses D-glucarate(in) + H(+)(in) = D-glucarate(out) + H(+)(out). It catalyses the reaction (R)-glycerate(in) + H(+)(in) = (R)-glycerate(out) + H(+)(out). Functionally, probably involved in the uptake of galactarate and/or D-glucarate. May also transport D-glycerate. In Escherichia coli (strain K12), this protein is Probable galactarate/D-glucarate transporter GudP.